Here is a 249-residue protein sequence, read N- to C-terminus: 2,3-bisphosphoglycerate-dependent phosphoglycerate mutase (249 aa).

Residues 9-16 (RHGQSQWN), 22-23 (TG), Arg-61, 88-91 (ERHY), Lys-99, 115-116 (RR), and 184-185 (GN) each bind substrate. Catalysis depends on His-10, which acts as the Tele-phosphohistidine intermediate. Residue Glu-88 is the Proton donor/acceptor of the active site.

Belongs to the phosphoglycerate mutase family. BPG-dependent PGAM subfamily. Homodimer.

It carries out the reaction (2R)-2-phosphoglycerate = (2R)-3-phosphoglycerate. The protein operates within carbohydrate degradation; glycolysis; pyruvate from D-glyceraldehyde 3-phosphate: step 3/5. Functionally, catalyzes the interconversion of 2-phosphoglycerate and 3-phosphoglycerate. This chain is 2,3-bisphosphoglycerate-dependent phosphoglycerate mutase, found in Xanthomonas oryzae pv. oryzae (strain MAFF 311018).